A 244-amino-acid polypeptide reads, in one-letter code: Carboxy-S-adenosyl-L-methionine synthase (244 aa).

S-adenosyl-L-methionine is bound by residues Tyr41, 66 to 68 (GCS), Asn134, and Arg201.

This sequence belongs to the class I-like SAM-binding methyltransferase superfamily. Cx-SAM synthase family. As to quaternary structure, homodimer.

The catalysed reaction is prephenate + S-adenosyl-L-methionine = carboxy-S-adenosyl-L-methionine + 3-phenylpyruvate + H2O. Its function is as follows. Catalyzes the conversion of S-adenosyl-L-methionine (SAM) to carboxy-S-adenosyl-L-methionine (Cx-SAM). The protein is Carboxy-S-adenosyl-L-methionine synthase of Cellvibrio japonicus (strain Ueda107) (Pseudomonas fluorescens subsp. cellulosa).